The chain runs to 199 residues: RNA-free ribonuclease P (199 aa).

This sequence belongs to the HARP family.

It carries out the reaction Endonucleolytic cleavage of RNA, removing 5'-extranucleotides from tRNA precursor.. Functionally, RNA-free RNase P that catalyzes the removal of the 5'-leader sequence from pre-tRNA to produce the mature 5'-terminus. The protein is RNA-free ribonuclease P of Pyrococcus furiosus (strain ATCC 43587 / DSM 3638 / JCM 8422 / Vc1).